The chain runs to 326 residues: Biotin synthase (326 aa).

The region spanning 51–278 (NRVQVSRLIS…KSFVRLSAGR (228 aa)) is the Radical SAM core domain. Residues C66, C70, and C73 each contribute to the [4Fe-4S] cluster site. The [2Fe-2S] cluster site is built by C110, C141, C201, and R273.

The protein belongs to the radical SAM superfamily. Biotin synthase family. In terms of assembly, homodimer. The cofactor is [4Fe-4S] cluster. [2Fe-2S] cluster serves as cofactor.

The enzyme catalyses (4R,5S)-dethiobiotin + (sulfur carrier)-SH + 2 reduced [2Fe-2S]-[ferredoxin] + 2 S-adenosyl-L-methionine = (sulfur carrier)-H + biotin + 2 5'-deoxyadenosine + 2 L-methionine + 2 oxidized [2Fe-2S]-[ferredoxin]. It functions in the pathway cofactor biosynthesis; biotin biosynthesis; biotin from 7,8-diaminononanoate: step 2/2. In terms of biological role, catalyzes the conversion of dethiobiotin (DTB) to biotin by the insertion of a sulfur atom into dethiobiotin via a radical-based mechanism. This Paramagnetospirillum magneticum (strain ATCC 700264 / AMB-1) (Magnetospirillum magneticum) protein is Biotin synthase.